The primary structure comprises 208 residues: Translation initiation factor 2 subunit beta (208 aa).

Residues 145–203 (VIEEGETYELRIESVGSKGDGIAKVDKYLIFVPNTSKGEIVKAKVKKISGTLAFAEIVE) form the TRAM domain.

Belongs to the eIF-2-beta/eIF-5 family. As to quaternary structure, heterotrimer composed of an alpha, a beta and a gamma chain.

Its function is as follows. eIF-2 functions in the early steps of protein synthesis by forming a ternary complex with GTP and initiator tRNA. The protein is Translation initiation factor 2 subunit beta of Methanothrix thermoacetophila (strain DSM 6194 / JCM 14653 / NBRC 101360 / PT) (Methanosaeta thermophila).